Here is a 136-residue protein sequence, read N- to C-terminus: ATP synthase epsilon chain 2 (136 aa).

The protein belongs to the ATPase epsilon chain family. As to quaternary structure, F-type ATPases have 2 components, CF(1) - the catalytic core - and CF(0) - the membrane proton channel. CF(1) has five subunits: alpha(3), beta(3), gamma(1), delta(1), epsilon(1). CF(0) has three main subunits: a, b and c.

It is found in the cell inner membrane. Its function is as follows. Produces ATP from ADP in the presence of a proton gradient across the membrane. In Nitrobacter hamburgensis (strain DSM 10229 / NCIMB 13809 / X14), this protein is ATP synthase epsilon chain 2.